Reading from the N-terminus, the 171-residue chain is S-ribosylhomocysteine lyase (171 aa).

Fe cation is bound by residues His-54, His-58, and Cys-128.

The protein belongs to the LuxS family. Homodimer. It depends on Fe cation as a cofactor.

The enzyme catalyses S-(5-deoxy-D-ribos-5-yl)-L-homocysteine = (S)-4,5-dihydroxypentane-2,3-dione + L-homocysteine. Functionally, involved in the synthesis of autoinducer 2 (AI-2) which is secreted by bacteria and is used to communicate both the cell density and the metabolic potential of the environment. The regulation of gene expression in response to changes in cell density is called quorum sensing. Catalyzes the transformation of S-ribosylhomocysteine (RHC) to homocysteine (HC) and 4,5-dihydroxy-2,3-pentadione (DPD). This is S-ribosylhomocysteine lyase from Serratia proteamaculans (strain 568).